The following is a 187-amino-acid chain: MQDKNNLCWLDMEMTGLNPETDRIIEVAMIITDSDLNVLAQSEVYAVHQSDELLDNMDEWNTATHGRTGLTQRVRESLHTEAEVEQKLLDFMSEWVPGRATPMCGNSIHQDRRFMVKYMPKLENYFHYRNLDVSTLKELAKRWNPSVAKSVVKRGSHKALDDILESIEEMRHYREHFLISAPRAEAQ.

Residues 7–170 form the Exonuclease domain; that stretch reads LCWLDMEMTG…DDILESIEEM (164 aa). Tyrosine 128 is a catalytic residue.

This sequence belongs to the oligoribonuclease family.

It is found in the cytoplasm. Functionally, 3'-to-5' exoribonuclease specific for small oligoribonucleotides. This Neisseria meningitidis serogroup C / serotype 2a (strain ATCC 700532 / DSM 15464 / FAM18) protein is Oligoribonuclease.